The primary structure comprises 362 residues: Neisseria adhesin A (362 aa).

The first 23 residues, 1-23, serve as a signal peptide directing secretion; the sequence is MKHFPSKVLTTAILATFCSGALA. The tract at residues 24-169 is head domain; sequence ATSDDDVKKA…NIVKIDEKLE (146 aa). 2 coiled-coil regions span residues 90–146 and 183–288; these read VTNL…LNKL and NDIA…KETR. Residues 170-307 are coiled stalk domain; sequence AVADTVDKHA…SGLFQPYNVG (138 aa). 4 consecutive transmembrane segments (beta stranded) span residues 307-317, 321-332, 339-345, and 351-362; these read GRFNVTAAVGG, ESAVAIGTGFRF, KAGVAVG, and SAAYHVGVNYEW. The interval 308-362 is translocator domain; that stretch reads RFNVTAAVGGYKSESAVAIGTGFRFTENFAAKAGVAVGTSSGSSAAYHVGVNYEW.

The protein belongs to the autotransporter-2 (AT-2) (TC 1.B.40) family. As to quaternary structure, forms high molecular weight oligomers in whole cell extracts that are not disrupted by boiling in SDS buffer. Homotrimer. A fragment containing the N-terminal half of the mature protein (residues 24-210, head domain plus part of the stalk) binds human integrin beta-1 (ITGB1). It was not seen to bind immobilized purified CEACAMs 1, 3, 5, 6 or 8 nor commercially prepared type I collagen, fibronectin or matrigel.

The protein resides in the cell surface. It localises to the cell outer membrane. Functionally, adheres to and induces bacterial uptake by human epithelial cells. Upon expression in engineered Y.enterocolitica confers an 11- to 15-fold increase in bacterial adherence and uptake by human epithelial cell lines; part of the uptake is mediated by integrin beta-1 (ITGB1) suggesting it may be a human receptor for NadA. A bacterial cell surface protein; antisera against this protein induce complement-mediated killing of this and other strains. In Neisseria meningitidis serogroup B (strain ATCC BAA-335 / MC58), this protein is Neisseria adhesin A.